A 1181-amino-acid polypeptide reads, in one-letter code: Sodium/potassium/calcium exchanger 1 (1181 aa).

Residues 1-419 (MGKLIRMGTQ…DLFSVEDRRQ (419 aa)) lie on the Extracellular side of the membrane. Disordered stretches follow at residues 107–232 (AMED…TSLK), 255–276 (SLVGKNTLGSPRRGERNSSTTP), and 300–323 (STPATTEGSTAAQRIGNPLSGTST). The segment covering 124-136 (SLKNNYSPTTAGT) has biased composition (polar residues). Residue Asn271 is glycosylated (N-linked (GlcNAc...) asparagine). The segment covering 301–311 (TPATTEGSTAA) has biased composition (polar residues). The chain crosses the membrane as a helical span at residues 420–440 (GWVVLHIFGMTYVFVALAIVC). At 441–464 (DEYFVPALGVITDKLQISEDVAGA) the chain is on the cytoplasmic side. The Alpha-1 repeat unit spans residues 461–501 (VAGATFMAAGGSAPELFTSLIGVFISHSNVGIGTIVGSAVF). The helical transmembrane segment at 465 to 485 (TFMAAGGSAPELFTSLIGVFI) threads the bilayer. The Extracellular portion of the chain corresponds to 486–491 (SHSNVG). A helical membrane pass occupies residues 492-512 (IGTIVGSAVFNILFVIGTCAL). The Cytoplasmic segment spans residues 513 to 519 (FSREILN). A helical transmembrane segment spans residues 520-544 (LTWWPLFRDVSFYILDLSMLIVFFL). The Extracellular segment spans residues 545-552 (DSLIAWWE). Residues 553 to 569 (SLLLLLAYALYVFTMKW) form a helical membrane-spanning segment. The Cytoplasmic segment spans residues 570–989 (NKQIERWVKE…SLEWPESRQK (420 aa)). Residues 598 to 617 (PSDGAIEENEQQDNKKLKLP) form a disordered region. Ser625 is modified (phosphoserine). The segment at 650-983 (GEARPSKDKQ…ESEEPLSLEW (334 aa)) is disordered. A Phosphothreonine modification is found at Thr690. The span at 701–715 (GDQEEDPGCQEDVDE) shows a compositional bias: acidic residues. 14 tandem repeats follow at residues 730–741 (ETEAEGKKDEEG), 742–754 (ETEAERKEDGQEE), 755–766 (ETETKGKEKQEG), 767–778 (ETESEGKDEQEG), 779–791 (ETEAEGKEADHEG), 792–804 (ETEAEGKEVEHEG), 805–817 (ETEAEGTEDEQEG), 818–830 (ETEAEGKEVEQEG), 831–843 (ETEAEGKEVEHEV), 844–856 (ETEAERKETNHEG), 857–869 (ETEAEGKEADHEG), 870–881 (ETEAEGNVEHQG), 882–893 (ETEAEGKVEHEG), and 894–905 (ETEAGEKDEHEG). 3 stretches are compositionally biased toward basic and acidic residues: residues 730–750 (ETEAEGKKDEEGETEAERKED), 757–775 (ETKGKEKQEGETESEGKDE), and 782–805 (AEGKEADHEGETEAEGKEVEHEGE). The tract at residues 730-905 (ETEAEGKKDE…EAGEKDEHEG (176 aa)) is 14 X approximate tandem repeats. Positions 806–820 (TEAEGTEDEQEGETE) are enriched in acidic residues. Residues 834-906 (AEGKEVEHEV…AGEKDEHEGQ (73 aa)) show a composition bias toward basic and acidic residues. Composition is skewed to acidic residues over residues 921-931 (GEAEANAEDQC) and 949-979 (GDSEEEEDEEDEEEEEEEEEEEEEEESEEPL). Residues 990–1010 (QAIYLFLLPIVFPLWLTIPDV) form a helical membrane-spanning segment. Topologically, residues 1011–1017 (RRQEARK) are extracellular. The helical transmembrane segment at 1018–1038 (FFVITFLGSIIWIAMFSYLMV) threads the bilayer. The Cytoplasmic portion of the chain corresponds to 1039–1053 (WWAHQVGETIGISEE). The helical transmembrane segment at 1054–1074 (IMGLTILAAGTSIPDLITSVI) threads the bilayer. One copy of the Alpha-2 repeat lies at 1061–1092 (AAGTSIPDLITSVIVARKGLGDMAVSSSVGSN). At 1075–1092 (VARKGLGDMAVSSSVGSN) the chain is on the extracellular side. A helical transmembrane segment spans residues 1093 to 1113 (IFDITVGLPVPWLLFSLINAL). Residues 1114–1121 (QPIPVSSN) are Cytoplasmic-facing. The chain crosses the membrane as a helical span at residues 1122–1142 (GLFCAIVLLFLMLLFVIFSIA). At 1143-1150 (SCKWRMNK) the chain is on the extracellular side. A helical membrane pass occupies residues 1151–1171 (ILGFTMFLLYFVFLVISVMLE). Residues 1172–1181 (DRIISCPVSV) are Cytoplasmic-facing.

It belongs to the Ca(2+):cation antiporter (CaCA) (TC 2.A.19) family. SLC24A subfamily. Post-translationally, the uncleaved signal sequence is required for efficient membrane targeting and proper membrane integration and topology. As to expression, highly expressed in the eye.

The protein localises to the cell membrane. The enzyme catalyses Ca(2+)(out) + K(+)(out) + 4 Na(+)(in) = Ca(2+)(in) + K(+)(in) + 4 Na(+)(out). Functionally, calcium, potassium:sodium antiporter that transports 1 Ca(2+) and 1 K(+) in exchange for 4 Na(+). Critical component of the visual transduction cascade, controlling the calcium concentration of outer segments during light and darkness. Light causes a rapid lowering of cytosolic free calcium in the outer segment of both retinal rod and cone photoreceptors and the light-induced lowering of calcium is caused by extrusion via this protein which plays a key role in the process of light adaptation. This Rattus norvegicus (Rat) protein is Sodium/potassium/calcium exchanger 1 (Slc24a1).